We begin with the raw amino-acid sequence, 95 residues long: uncharacterized protein (95 aa).

Positions 1 to 24 (MKKLATLTALAGALTMAVATAAQA) form a signal peptide, or 21. The segment covering 55 to 89 (EGKCGADKAKSAEGKCGEGKCGADKAKSAEGKCGE) has biased composition (basic and acidic residues). The tract at residues 55 to 95 (EGKCGADKAKSAEGKCGEGKCGADKAKSAEGKCGEGKCGSK) is disordered.

This is an uncharacterized protein from Haemophilus influenzae (strain ATCC 51907 / DSM 11121 / KW20 / Rd).